The chain runs to 425 residues: 5-aminovalerate aminotransferase DavT (425 aa).

Residues 112–113 (GS), Y139, and 240–243 (DEVQ) contribute to the pyridoxal 5'-phosphate site. N6-(pyridoxal phosphate)lysine is present on K269. T298 contributes to the pyridoxal 5'-phosphate binding site.

This sequence belongs to the class-III pyridoxal-phosphate-dependent aminotransferase family. Pyridoxal 5'-phosphate is required as a cofactor.

It catalyses the reaction 5-aminopentanoate + 2-oxoglutarate = 5-oxopentanoate + L-glutamate. Catalyzes the conversion of 5-aminovalerate to 5-oxopentanoate. In Pseudomonas putida (strain ATCC 47054 / DSM 6125 / CFBP 8728 / NCIMB 11950 / KT2440), this protein is 5-aminovalerate aminotransferase DavT (davT).